A 195-amino-acid polypeptide reads, in one-letter code: U8 snoRNA-decapping enzyme (195 aa).

Residues 18–173 (DWRHACHALL…IGAAREQLLE (156 aa)) enclose the Nudix hydrolase domain. Substrate contacts are provided by His24, Arg50, and Phe57. Mn(2+) contacts are provided by Gly59, Glu76, Glu80, and His99. A Nudix box motif is present at residues 61-82 (FVDAQDSCLEDGLNRELREELG). Position 170 (Gln170) interacts with substrate. Glu173 lines the Mn(2+) pocket.

It belongs to the Nudix hydrolase family. NUDT16 subfamily. As to quaternary structure, homodimer. The cofactor is Mg(2+). Mn(2+) is required as a cofactor. Requires Co(2+) as cofactor. In terms of tissue distribution, expressed in brain, testis, spleen, lung, heart, liver, kidney and muscle (at protein level).

It is found in the nucleus. The protein resides in the nucleolus. The protein localises to the nucleoplasm. It localises to the cytoplasm. The catalysed reaction is a 5'-end (N(7)-methyl 5'-triphosphoguanosine)-ribonucleoside in mRNA + H2O = N(7)-methyl-GDP + a 5'-end phospho-ribonucleoside in mRNA + 2 H(+). It carries out the reaction IDP + H2O = IMP + phosphate + H(+). The enzyme catalyses dIDP + H2O = dIMP + phosphate + H(+). It catalyses the reaction a 5'-end NAD(+)-phospho-ribonucleoside in mRNA + H2O = a 5'-end phospho-ribonucleoside in mRNA + NAD(+) + H(+). The catalysed reaction is a 5'-end FAD-phospho-ribonucleoside in mRNA + H2O = a 5'-end phospho-adenosine-phospho-ribonucleoside in mRNA + FMN + 2 H(+). It carries out the reaction a 5'-end CoA-ribonucleoside in mRNA + H2O = a 5'-end phospho-adenosine-phospho-ribonucleoside in mRNA + (R)-4'-phosphopantetheine + 2 H(+). In terms of biological role, RNA-binding and decapping enzyme that catalyzes the cleavage of the cap structure of snoRNAs and mRNAs in a metal-dependent manner. Part of the U8 snoRNP complex that is required for the accumulation of mature 5.8S and 28S rRNA. Has diphosphatase activity and removes m7G and/or m227G caps from U8 snoRNA and leaves a 5'monophosphate on the RNA. Also catalyzes the cleavage of the cap structure on mRNAs. Does not hydrolyze cap analog structures like 7-methylguanosine nucleoside triphosphate (m7GpppG). Also hydrolysis m7G- and m227G U3-capped RNAs but with less efficiencies. Has broad substrate specificity with manganese or cobalt as cofactor and can act on various RNA species. Binds to the U8 snoRNA; metal is not required for RNA-binding. May play a role in the regulation of snoRNAs and mRNAs degradation. Also acts as a phosphatase; hydrolyzes the non-canonical purine nucleotides inosine diphosphate (IDP) and deoxyinosine diphosphate (dITP) as well as guanosine diphosphate (GDP), deoxyguanosine diphosphate (dGDP), xanthine diphosphate (XDP), inosine triphosphate (ITP) and deoxyinosine triphosphate (ITP) to their respective monophosphate derivatives and does not distinguish between the deoxy- and ribose forms. The order of activity with different substrates is IDP &gt; dIDP &gt;&gt; GDP = dGDP &gt; XDP = ITP = dITP. Binds strongly to GTP, ITP and XTP. Participates in the hydrolysis of dIDP/IDP and probably excludes non-canonical purines from RNA and DNA precursor pools, thus preventing their incorporation into RNA and DNA and avoiding chromosomal lesions. Exhibits decapping activity towards NAD-capped RNAs and FAD-capped RNAs. Exhibits decapping activity towards dpCoA-capped RNAs in vitro. This Mus musculus (Mouse) protein is U8 snoRNA-decapping enzyme (Nudt16).